A 351-amino-acid chain; its full sequence is Outer membrane protein A (351 aa).

The signal sequence occupies residues 1–21 (MKKTAIAIAVALAGFATVAQA). Beta stranded transmembrane passes span 27–37 (TWYTGAKLGWS), 55–66 (QLGAGAFGGYQV), 70–78 (VGFEMGYDW), 96–107 (QGVQLTAKLGYP), 112–120 (LDIYTRLGG), 147–156 (PVFAGGVEWA), 161–168 (IATRLEYQ), and 187–195 (LLSLGVSYR). 4 consecutive repeat copies span residues 206-207 (AP), 208-209 (AP), 210-211 (AP), and 212-213 (AP). Residues 206-213 (APAPAPAP) form a 4 X 2 AA tandem repeats of A-P region. The 129-residue stretch at 215-343 (VQTKHFTLKS…RVEIEVKGIK (129 aa)) folds into the OmpA-like domain. The cysteines at positions 316 and 328 are disulfide-linked.

Belongs to the outer membrane OOP (TC 1.B.6) superfamily. OmpA family. As to quaternary structure, monomer and homodimer.

It localises to the cell outer membrane. With TolR probably plays a role in maintaining the position of the peptidoglycan cell wall in the periplasm. Acts as a porin with low permeability that allows slow penetration of small solutes; an internal gate slows down solute passage. Functionally, required for conjugation with F-type plasmids; probably serves as the mating receptor on recipient cells. This Escherichia fergusonii (strain ATCC 35469 / DSM 13698 / CCUG 18766 / IAM 14443 / JCM 21226 / LMG 7866 / NBRC 102419 / NCTC 12128 / CDC 0568-73) protein is Outer membrane protein A.